We begin with the raw amino-acid sequence, 1371 residues long: MEVENRPYPYMVSDANLLQQIKESSAEGLFKSFSLLLGKDVRESGVKFEALLGVYTNATQFVKFLETSLAVSCVNTEFKDLKRMTDGKIQFKINVPTIAHGDGRRPQKQKQFIIMKATNKHHIGAEIELSTQDLELLFLSKETPLDVTEYVGAVKTITSALQFGIDALERGLIDTVLTVKLRHAPPLFILKTLADPTYTERGLKKNVKSDLISMFKTHLVNNSFFLDKSEHLPHSRQYVLGILTEMIGAVCKETVFKGISTYSTANGQPISGVLETTDKVMRKLVNVIGQADNSIMGPAAYANYVVRGENLVTAISYGKAMRNFDHFMSKLVDNPTSNLDNDAVDTFESTGSIQKTPISTSVVMVGNKLIALESLQRMYNETQLPYPLNRRMHYTYYFPVGLHLPSPKYSTSMSVKGTENVLHQSVEAWIVNKNNTLQCFNYQNALKSICHPRMNSPILCARALGEAFPDVHNLNIYGIRSEDAHTMNLYQIVYDYYDNKHVAHVHSLAQKSMMTHEEVLHPTNHEILRTEVHPFFDVYAERHQGAAVQYRATHRNLSGNLPPPLAPYSFQECRGYQFEVASGLNHVIDSTTMEIIQETAFDPAYPLLCYIVESMIHGQEEKFVMNIPLIALCIQTYWNNSGRLAFINSFYMLKFICTHMGNGHISKDAYSCYRKIYGELIAIEQSLYRLAGHENVANENIGQLINAILDKDLLPPFAYNDIFTNLLRKSSRHPVVKIGMEEYDDDNDQQNCINIREKMEDLVGNMVNIYQQRNNTDHSRRYVLDVGELQENTYNSVLEKIFYYVLLPVCTNGHVCGMGVDFENVALTLTYNGPVFASAVNQDADILDHLENGTLRDVLVASEIRPTVGMIRRLCTSFLTCPFITQAARIKTDRDPGQNIVTHTDGKYVHQTVLVNGFAAFAIADKSRDAAHCLFYPVPFNKLYCDPMVAATLHPIVAEFITEIPSQRNAVVFNLPPRLIAEYEEWHKSPMSSYVSTCSQTPLSLSTMIAMHLKLSPVSFICQSRHKIHPGFALTAVRTDEVVAEHIMYSSKASTSVFIGQPTVHRKEVRSDAVVFDINHELASLDTALGYSSTIVPAHAAAITTDMGIHCQDLFAMFPSEAYSNQQLNEYIKQKIGSDRVYGMPLRDPREYMGGNRRVTLPGLSHGQLATCEVIMTPVTADITYFQSSNSPRGRASCVVSCDAYNNESAEKFLYDHSLPDPCYEFRSTINPWASQIGSLGDVFFNSQHRQMAGPTLYSPCKQFFNKEAILKNNKLFYTLVTEYVNRLTGAPATSNTDFQYVVINGTDVFLEQPCQFLQEAYPTLSASHRALLDEYMSHKTTHAPVHVNQYLVEEVAPMKRLLKVGNKTVY.

This sequence belongs to the herpesviridae major capsid protein family. Homomultimer. Makes the hexons and eleven out of twelve pentons. Interacts with triplex proteins 1/TRX1 and 2/TRX2; adjacent capsomers are linked together in groups of three by triplexes, heterotrimeric complexes composed of one molecule of TRX1 and two molecules of TRX2. Interacts with scaffold protein; this interaction allows efficient MCP transport to the host nucleus. Interacts with capsid vertex component 2/CVC2. Interacts with the small capsomere-interacting protein/SCP.

Its subcellular location is the virion. The protein resides in the host nucleus. In terms of biological role, self-assembles to form an icosahedral capsid with a T=16 symmetry, about 200 nm in diameter, and consisting of 150 hexons and 12 pentons (total of 162 capsomers). Hexons form the edges and faces of the capsid and are each composed of six MCP molecules. In contrast, one penton is found at each of the 12 vertices. Eleven of the pentons are MCP pentamers, while the last vertex is occupied by the portal complex. The capsid is surrounded by a layer of proteinaceous material designated the tegument which, in turn, is enclosed in an envelope of host cell-derived lipids containing virus-encoded glycoproteins. The protein is Major capsid protein of Saimiriine herpesvirus 2 (strain 11) (SaHV-2).